The primary structure comprises 165 residues: 3-isopropylmalate dehydratase small subunit 2 (165 aa).

This sequence belongs to the LeuD family. LeuD type 2 subfamily. In terms of assembly, heterodimer of LeuC and LeuD.

The enzyme catalyses (2R,3S)-3-isopropylmalate = (2S)-2-isopropylmalate. Its pathway is amino-acid biosynthesis; L-leucine biosynthesis; L-leucine from 3-methyl-2-oxobutanoate: step 2/4. Catalyzes the isomerization between 2-isopropylmalate and 3-isopropylmalate, via the formation of 2-isopropylmaleate. The chain is 3-isopropylmalate dehydratase small subunit 2 (leuD2) from Archaeoglobus fulgidus (strain ATCC 49558 / DSM 4304 / JCM 9628 / NBRC 100126 / VC-16).